The chain runs to 807 residues: Leucine--tRNA ligase (807 aa).

A 'HIGH' region motif is present at residues 40–51 (PYPSGSGLHVGH). The 'KMSKS' region signature appears at 576 to 580 (KMSKS). Lys579 contributes to the ATP binding site.

This sequence belongs to the class-I aminoacyl-tRNA synthetase family.

Its subcellular location is the cytoplasm. The catalysed reaction is tRNA(Leu) + L-leucine + ATP = L-leucyl-tRNA(Leu) + AMP + diphosphate. The chain is Leucine--tRNA ligase from Chlorobaculum parvum (strain DSM 263 / NCIMB 8327) (Chlorobium vibrioforme subsp. thiosulfatophilum).